Consider the following 297-residue polypeptide: N-acetylneuraminate lyase (297 aa).

The aceneuramate site is built by Ser47 and Thr48. Catalysis depends on Tyr137, which acts as the Proton donor. Lys165 (schiff-base intermediate with substrate) is an active-site residue. Thr167, Gly189, Asp191, Glu192, and Ser208 together coordinate aceneuramate.

The protein belongs to the DapA family. NanA subfamily. Homotetramer.

It localises to the cytoplasm. It catalyses the reaction aceneuramate = aldehydo-N-acetyl-D-mannosamine + pyruvate. The protein operates within amino-sugar metabolism; N-acetylneuraminate degradation; D-fructose 6-phosphate from N-acetylneuraminate: step 1/5. Catalyzes the reversible aldol cleavage of N-acetylneuraminic acid (sialic acid; Neu5Ac) to form pyruvate and N-acetylmannosamine (ManNAc) via a Schiff base intermediate. The protein is N-acetylneuraminate lyase of Salmonella paratyphi A (strain AKU_12601).